Consider the following 98-residue polypeptide: DNA-binding protein Fis (98 aa).

Residues 74–93 (QTRAATMMGINRGTLRKKLK) constitute a DNA-binding region (H-T-H motif).

This sequence belongs to the transcriptional regulatory Fis family. In terms of assembly, homodimer.

Its function is as follows. Activates ribosomal RNA transcription. Plays a direct role in upstream activation of rRNA promoters. This is DNA-binding protein Fis from Vibrio parahaemolyticus serotype O3:K6 (strain RIMD 2210633).